The chain runs to 136 residues: Large ribosomal subunit protein uL16 (136 aa).

The protein belongs to the universal ribosomal protein uL16 family. In terms of assembly, part of the 50S ribosomal subunit.

Its function is as follows. Binds 23S rRNA and is also seen to make contacts with the A and possibly P site tRNAs. The protein is Large ribosomal subunit protein uL16 of Mannheimia succiniciproducens (strain KCTC 0769BP / MBEL55E).